A 101-amino-acid chain; its full sequence is NADH-quinone oxidoreductase subunit K (101 aa).

The next 3 membrane-spanning stretches (helical) occupy residues 2-22, 29-49, and 63-83; these read ISLN…LVGV, IMLF…LVAI, and MFII…LILW.

This sequence belongs to the complex I subunit 4L family. In terms of assembly, NDH-1 is composed of 14 different subunits. Subunits NuoA, H, J, K, L, M, N constitute the membrane sector of the complex.

The protein resides in the cell inner membrane. It catalyses the reaction a quinone + NADH + 5 H(+)(in) = a quinol + NAD(+) + 4 H(+)(out). In terms of biological role, NDH-1 shuttles electrons from NADH, via FMN and iron-sulfur (Fe-S) centers, to quinones in the respiratory chain. The immediate electron acceptor for the enzyme in this species is believed to be ubiquinone. Couples the redox reaction to proton translocation (for every two electrons transferred, four hydrogen ions are translocated across the cytoplasmic membrane), and thus conserves the redox energy in a proton gradient. In Campylobacter hominis (strain ATCC BAA-381 / DSM 21671 / CCUG 45161 / LMG 19568 / NCTC 13146 / CH001A), this protein is NADH-quinone oxidoreductase subunit K.